Consider the following 148-residue polypeptide: Snaclec 6 (148 aa).

A signal peptide spans 1 to 23 (MGRFIFVSFGLLVMFLSLSGTEA). 3 disulfides stabilise this stretch: cysteine 27-cysteine 38, cysteine 55-cysteine 144, and cysteine 121-cysteine 136. In terms of domain architecture, C-type lectin spans 34-145 (YDQNCYKAFE…CSGTHNFVCK (112 aa)). N-linked (GlcNAc...) asparagine glycosylation occurs at asparagine 130.

The protein belongs to the snaclec family. As to quaternary structure, heterodimer; disulfide-linked. As to expression, expressed by the venom gland.

It localises to the secreted. In terms of biological role, interferes with one step of hemostasis (modulation of platelet aggregation, or coagulation cascade, for example). The protein is Snaclec 6 of Bitis arietans (African puff adder).